The following is a 137-amino-acid chain: Small ribosomal subunit protein uS12 (137 aa).

Disordered stretches follow at residues 1-21 (MPTINQLVRKPRKSKIEKSDS) and 34-57 (VHTKIAAPQKRGVATRVGTMTPKK). The residue at position 102 (Asp102) is a 3-methylthioaspartic acid.

Belongs to the universal ribosomal protein uS12 family. As to quaternary structure, part of the 30S ribosomal subunit. Contacts proteins S8 and S17. May interact with IF1 in the 30S initiation complex.

In terms of biological role, with S4 and S5 plays an important role in translational accuracy. Interacts with and stabilizes bases of the 16S rRNA that are involved in tRNA selection in the A site and with the mRNA backbone. Located at the interface of the 30S and 50S subunits, it traverses the body of the 30S subunit contacting proteins on the other side and probably holding the rRNA structure together. The combined cluster of proteins S8, S12 and S17 appears to hold together the shoulder and platform of the 30S subunit. This Streptococcus uberis (strain ATCC BAA-854 / 0140J) protein is Small ribosomal subunit protein uS12.